The following is a 259-amino-acid chain: Large ribosomal subunit protein uL3m (259 aa).

Residues 1 to 15 constitute a mitochondrion transit peptide; sequence MQSRFLISPTLIRTF. The segment covering 176-197 has biased composition (polar residues); sequence ASHGASLSHRTPGSTGQNTTPS. The disordered stretch occupies residues 176–208; sequence ASHGASLSHRTPGSTGQNTTPSRVLPGRKMAGH.

Belongs to the universal ribosomal protein uL3 family. As to quaternary structure, component of the mitochondrial large ribosomal subunit (mt-LSU). Mature yeast 74S mitochondrial ribosomes consist of a small (37S) and a large (54S) subunit. The 37S small subunit contains a 15S ribosomal RNA (15S mt-rRNA) and at least 32 different proteins. The 54S large subunit contains a 21S rRNA (21S mt-rRNA) and at least 45 different proteins.

Its subcellular location is the cytoplasm. It is found in the mitochondrion. Its function is as follows. Component of the mitochondrial ribosome (mitoribosome), a dedicated translation machinery responsible for the synthesis of mitochondrial genome-encoded proteins, including at least some of the essential transmembrane subunits of the mitochondrial respiratory chain. The mitoribosomes are attached to the mitochondrial inner membrane and translation products are cotranslationally integrated into the membrane. The polypeptide is Large ribosomal subunit protein uL3m (mrpl9) (Schizosaccharomyces pombe (strain 972 / ATCC 24843) (Fission yeast)).